The chain runs to 119 residues: MDDSKIVAGKVKKPGKRGRKPAKIDLKAKLERSRQSARECRARKKLRYQYLEELVSSKERAICALREELDMYKQWCLAMDQGKIPSEIKALLTGDEQKTPQSCSNKTTKNSKYSSSSGI.

The tract at residues 1-23 (MDDSKIVAGKVKKPGKRGRKPAK) is disordered. The span at 10–21 (KVKKPGKRGRKP) shows a compositional bias: basic residues. The 64-residue stretch at 23–86 (KIDLKAKLER…LAMDQGKIPS (64 aa)) folds into the bZIP domain. A basic motif region spans residues 29-60 (KLERSRQSARECRARKKLRYQYLEELVSSKER). The interval 62-69 (ICALREEL) is leucine-zipper. The tract at residues 95-119 (DEQKTPQSCSNKTTKNSKYSSSSGI) is disordered. Residues 102-119 (SCSNKTTKNSKYSSSSGI) are compositionally biased toward low complexity.

The protein belongs to the bZIP family. ATF subfamily.

It is found in the nucleus. In terms of biological role, probable regulator of creb1 transcriptional activity which is involved in adipose cells differentiation. May also play a regulatory role in the cell cycle. The sequence is that of cAMP-responsive element-binding protein-like 2 (crebl2) from Danio rerio (Zebrafish).